The primary structure comprises 182 residues: Keratin, type II cytoskeletal 68 kDa, component IA (182 aa).

In terms of domain architecture, IF rod spans 1–66 (DAEQHGEVAL…TLLEGEECRM (66 aa)). The segment at 1 to 66 (DAEQHGEVAL…TLLEGEECRM (66 aa)) is coil 2B. The tract at residues 67-86 (SGECQSSVSIEMVHNTTSSS) is H2 subdomain. Residues 67–182 (SGECQSSVSI…SQSQRSHHKL (116 aa)) form a tail region. A V2 subdomain region spans residues 87 to 162 (SGGSGALGGG…GSCAVSGVGG (76 aa)). Over residues 104–124 (GSGGLGSGSLGSGRLGSGGRG) the composition is skewed to gly residues. The interval 104–182 (GSGGLGSGSL…SQSQRSHHKL (79 aa)) is disordered. Low complexity-rich tracts occupy residues 144-158 (VRGS…CAVS) and 165-176 (SVRVTQSSSQSQ). The segment at 163–182 (RGSVRVTQSSSQSQRSHHKL) is E2 subdomain.

The protein belongs to the intermediate filament family. In terms of assembly, heterotetramer of two type I and two type II keratins.

This Bos taurus (Bovine) protein is Keratin, type II cytoskeletal 68 kDa, component IA.